Here is a 561-residue protein sequence, read N- to C-terminus: Potassium-transporting ATPase potassium-binding subunit (561 aa).

10 helical membrane passes run 4–24 (IVMQDVFFVVLLLVLAVPLGI), 65–85 (AVSVLAFSAVGFVFVMAVLML), 133–153 (IGLTVQNFVSAATGIAVLFAV), 177–197 (LYILLPLSLILALLLVSQGVV), 253–273 (FTNLIEMLAILLIPVALVVMF), 285–305 (AIMTAMMIVFVIGVVAITISE), 380–400 (GLYGMIGFIILTVFIAGLLVG), 417–437 (MVCLLILVPPLLTLFGTAVAV), 484–504 (MVGAVMMLLARFIPLVAALYL), and 528–548 (FIGLLIGVVVLVGALSFLPAL).

Belongs to the KdpA family. The system is composed of three essential subunits: KdpA, KdpB and KdpC.

The protein resides in the cell membrane. In terms of biological role, part of the high-affinity ATP-driven potassium transport (or Kdp) system, which catalyzes the hydrolysis of ATP coupled with the electrogenic transport of potassium into the cytoplasm. This subunit binds the extracellular potassium ions and delivers the ions to the membrane domain of KdpB through an intramembrane tunnel. The protein is Potassium-transporting ATPase potassium-binding subunit of Listeria monocytogenes serovar 1/2a (strain ATCC BAA-679 / EGD-e).